A 527-amino-acid chain; its full sequence is Tyrosine--tRNA ligase, cytoplasmic (527 aa).

Tyrosine 39 is an L-tyrosine binding site. Residues 44–52 (TTGKPHVAY) carry the 'HIGH' region motif. L-tyrosine-binding residues include tyrosine 166, glutamine 170, aspartate 173, and glutamine 188. A 'KMSKS' region motif is present at residues 222 to 226 (KMSSS). Residues 242 to 247 (KKKLKK) carry the Nuclear localization signal motif. The segment at 337 to 362 (TNAAYPNPSKAKPAEKGTKNSEPETI) is disordered. Positions 348–358 (KPAEKGTKNSE) are enriched in basic and acidic residues. Positions 363–467 (VPSRLDIRVG…AECCAGERVY (105 aa)) constitute a tRNA-binding domain.

Belongs to the class-I aminoacyl-tRNA synthetase family. In terms of assembly, homodimer.

It localises to the cytoplasm. The protein resides in the nucleus. It carries out the reaction tRNA(Tyr) + L-tyrosine + ATP = L-tyrosyl-tRNA(Tyr) + AMP + diphosphate + H(+). Its function is as follows. Catalyzes the attachment of tyrosine to tRNA(Tyr) in a two-step reaction: tyrosine is first activated by ATP to form Tyr-AMP and then transferred to the acceptor end of tRNA(Tyr). The sequence is that of Tyrosine--tRNA ligase, cytoplasmic (YARS1) from Gallus gallus (Chicken).